A 455-amino-acid polypeptide reads, in one-letter code: Epoxide hydrolase 1 (455 aa).

Residues 1–21 (MLLELLLASVLGFVIYWFVSG) traverse the membrane as a helical; Signal-anchor for type III membrane protein segment. Residues 22-455 (DKEESLPLED…CKFVGLVERQ (434 aa)) lie on the Cytoplasmic side of the membrane. Asp226 functions as the Nucleophile in the catalytic mechanism. Arg295 bears the Dimethylated arginine mark. The active-site Proton donor is Tyr374. The Proton acceptor role is filled by His431.

Belongs to the peptidase S33 family.

It localises to the microsome membrane. The protein localises to the endoplasmic reticulum membrane. The enzyme catalyses cis-stilbene oxide + H2O = (1R,2R)-hydrobenzoin. It carries out the reaction 1-(4-methoxyphenyl)-N-methyl-N-[(3-methyloxetan-3-yl)methyl]methanamine + H2O = 2-{[(4-methoxybenzyl)(methyl)amino]methyl}-2-methylpropane-1,3-diol. The catalysed reaction is 8,9-epoxy-(5Z,11Z,14Z)-eicosatrienoate + H2O = 8,9-dihydroxy-(5Z,11Z,14Z)-eicosatrienoate. It catalyses the reaction 11,12-epoxy-(5Z,8Z,14Z)-eicosatrienoate + H2O = 11,12-dihydroxy-(5Z,8Z,14Z)-eicosatrienoate. The enzyme catalyses 2-(5Z,8Z,11Z,14Z-eicosatetraenoyl)-glycerol + H2O = glycerol + (5Z,8Z,11Z,14Z)-eicosatetraenoate + H(+). With respect to regulation, inhibited by 10-hydroxystearamide and methoxy-arachidonyl fluorophosphate. Biotransformation enzyme that catalyzes the hydrolysis of arene and aliphatic epoxides to less reactive and more water soluble dihydrodiols by the trans addition of water. May play a role in the metabolism of endogenous lipids such as epoxide-containing fatty acids. Metabolizes the abundant endocannabinoid 2-arachidonoylglycerol (2-AG) to free arachidonic acid (AA) and glycerol. Binds 20(S)-hydroxycholesterol (20(S)-OHC). The chain is Epoxide hydrolase 1 (EPHX1) from Oryctolagus cuniculus (Rabbit).